We begin with the raw amino-acid sequence, 217 residues long: tRNA (guanine-N(7)-)-methyltransferase (217 aa).

S-adenosyl-L-methionine-binding residues include E44, E69, N96, and D118. D118 is an active-site residue. K122 contributes to the substrate binding site. The interval 124–129 (RHEKRR) is interaction with RNA. Substrate contacts are provided by residues D154 and 191 to 194 (TEYE).

The protein belongs to the class I-like SAM-binding methyltransferase superfamily. TrmB family.

It catalyses the reaction guanosine(46) in tRNA + S-adenosyl-L-methionine = N(7)-methylguanosine(46) in tRNA + S-adenosyl-L-homocysteine. Its pathway is tRNA modification; N(7)-methylguanine-tRNA biosynthesis. Its function is as follows. Catalyzes the formation of N(7)-methylguanine at position 46 (m7G46) in tRNA. The sequence is that of tRNA (guanine-N(7)-)-methyltransferase from Geobacillus kaustophilus (strain HTA426).